Here is a 505-residue protein sequence, read N- to C-terminus: Flagellin (505 aa).

It belongs to the bacterial flagellin family.

The protein resides in the secreted. The protein localises to the bacterial flagellum. In terms of biological role, flagellin is the subunit protein which polymerizes to form the filaments of bacterial flagella. This is Flagellin (fliC) from Salmonella dublin.